The sequence spans 160 residues: Putative pre-16S rRNA nuclease (160 aa).

Belongs to the YqgF nuclease family.

It localises to the cytoplasm. In terms of biological role, could be a nuclease involved in processing of the 5'-end of pre-16S rRNA. The sequence is that of Putative pre-16S rRNA nuclease from Rhodopseudomonas palustris (strain HaA2).